The sequence spans 282 residues: Probable endonuclease 4 (282 aa).

His-69, His-109, Glu-145, Asp-179, His-182, His-216, Asp-229, His-231, and Glu-261 together coordinate Zn(2+).

This sequence belongs to the AP endonuclease 2 family. It depends on Zn(2+) as a cofactor.

The catalysed reaction is Endonucleolytic cleavage to 5'-phosphooligonucleotide end-products.. In terms of biological role, endonuclease IV plays a role in DNA repair. It cleaves phosphodiester bonds at apurinic or apyrimidinic (AP) sites, generating a 3'-hydroxyl group and a 5'-terminal sugar phosphate. The polypeptide is Probable endonuclease 4 (Magnetococcus marinus (strain ATCC BAA-1437 / JCM 17883 / MC-1)).